We begin with the raw amino-acid sequence, 615 residues long: DNA mismatch repair protein MutL (615 aa).

Belongs to the DNA mismatch repair MutL/HexB family.

Its function is as follows. This protein is involved in the repair of mismatches in DNA. It is required for dam-dependent methyl-directed DNA mismatch repair. May act as a 'molecular matchmaker', a protein that promotes the formation of a stable complex between two or more DNA-binding proteins in an ATP-dependent manner without itself being part of a final effector complex. The sequence is that of DNA mismatch repair protein MutL from Histophilus somni (strain 2336) (Haemophilus somnus).